We begin with the raw amino-acid sequence, 176 residues long: Conidiation-specific protein 8 (176 aa).

Disordered stretches follow at residues 1-66 (MDDT…SKLI) and 79-162 (AASE…PQGF). Positions 79–99 (AASEAFRSERSASTSSTTSET) are enriched in low complexity.

The sequence is that of Conidiation-specific protein 8 (con-8) from Neurospora crassa (strain ATCC 24698 / 74-OR23-1A / CBS 708.71 / DSM 1257 / FGSC 987).